Consider the following 157-residue polypeptide: Endoribonuclease YbeY (157 aa).

The Zn(2+) site is built by histidine 114, histidine 118, and histidine 124.

Belongs to the endoribonuclease YbeY family. Zn(2+) serves as cofactor.

Its subcellular location is the cytoplasm. In terms of biological role, single strand-specific metallo-endoribonuclease involved in late-stage 70S ribosome quality control and in maturation of the 3' terminus of the 16S rRNA. This Yersinia pestis protein is Endoribonuclease YbeY.